A 302-amino-acid chain; its full sequence is Probable alpha-L-glutamate ligase (302 aa).

The ATP-grasp domain occupies 105–288 (LQLLARKGIP…LAGKIIEYIE (184 aa)). ATP is bound by residues K142, 179 to 180 (EF), D188, and 212 to 214 (RAN). Residues D249, E261, and N263 each contribute to the Mg(2+) site. D249, E261, and N263 together coordinate Mn(2+).

The protein belongs to the RimK family. It depends on Mg(2+) as a cofactor. The cofactor is Mn(2+).

The polypeptide is Probable alpha-L-glutamate ligase (Legionella pneumophila (strain Paris)).